We begin with the raw amino-acid sequence, 220 residues long: Zip homologous protein 1 (220 aa).

The segment at 6–44 adopts an RING-type zinc-finger fold; sequence CNGCGCSPSKRQFFITACSHVFCETCRTTPTADFCHLCK. Residues 124 to 155 adopt a coiled-coil conformation; that stretch reads LTSFEENNRKKLEDIERENEKLRNLISALELK. Disordered stretches follow at residues 166 to 186 and 201 to 220; these read EFFM…SDVD and RSDS…GSLF. A compositionally biased stretch (polar residues) spans 171–180; the sequence is GTPTSSNPSV.

In terms of assembly, interacts with zhp-2; the interaction is required for their chromosome association and stability. Expressed in the germline.

Its subcellular location is the chromosome. Recruited co-dependently with zhp-2 to the synaptonemal complex between homologous chromosome pairs to regulate the formation and number of crossover events between homologs during meiotic recombination. Together with zhp-2, promotes the accumulation of pro-crossover proteins, including zhp-3 and zhp-4, at a designated crossover site along the recombination intermediate. Limits the number of crossover sites along a recombination intermediate by restricting the association of these pro-crossover proteins with other recombination sites during late prophase. Also, together with zhp-2, plays a role in chromosome remodeling following crossover formation to promote two successive rounds of chromosome segregation during meiosis. This chain is Zip homologous protein 1, found in Caenorhabditis elegans.